The sequence spans 147 residues: MSNFTAEDKAAITSLWAKVNVEDAGGETLGRLLVVYPWTQRFFDSFGSLSSPSAIMGNPKVKAHGVKVLTSLGEAIKNLDDLKGTFGQLSELHCDKLHVDPENFRLLGNVLVTVLAILYGKEFTPEVQASWQKMVAGVASALASRYH.

Residues 3-147 (NFTAEDKAAI…VASALASRYH (145 aa)) form the Globin domain. Residues histidine 64 and histidine 93 each contribute to the heme b site.

The protein belongs to the globin family. In terms of assembly, heterotetramer of two alpha chains and two gamma chains in fetal hemoglobin (Hb F). In terms of tissue distribution, red blood cells.

In terms of biological role, gamma chains make up the fetal hemoglobin F, in combination with alpha chains. The sequence is that of Hemoglobin subunit gamma (HBG1) from Callithrix jacchus (White-tufted-ear marmoset).